A 635-amino-acid chain; its full sequence is Chaperone protein DnaK (635 aa).

A Phosphothreonine; by autocatalysis modification is found at Thr198. The disordered stretch occupies residues 597–635; the sequence is LYEQDQANNERHDTPETEKAEGDNVVDAEFQEIDDQDKK. Residues 604–618 are compositionally biased toward basic and acidic residues; the sequence is NNERHDTPETEKAEG. Acidic residues predominate over residues 620–635; the sequence is NVVDAEFQEIDDQDKK.

Belongs to the heat shock protein 70 family.

Functionally, acts as a chaperone. This chain is Chaperone protein DnaK, found in Zymomonas mobilis subsp. mobilis (strain ATCC 31821 / ZM4 / CP4).